The sequence spans 115 residues: NADH-ubiquinone oxidoreductase chain 3 (115 aa).

Transmembrane regions (helical) follow at residues 3 to 23 (LIMT…IAFW), 55 to 75 (FFLV…LLPL), and 84 to 104 (LTTM…SLAY).

It belongs to the complex I subunit 3 family. As to quaternary structure, core subunit of respiratory chain NADH dehydrogenase (Complex I) which is composed of 45 different subunits. Interacts with TMEM186. Interacts with TMEM242.

Its subcellular location is the mitochondrion inner membrane. It catalyses the reaction a ubiquinone + NADH + 5 H(+)(in) = a ubiquinol + NAD(+) + 4 H(+)(out). Core subunit of the mitochondrial membrane respiratory chain NADH dehydrogenase (Complex I) which catalyzes electron transfer from NADH through the respiratory chain, using ubiquinone as an electron acceptor. Essential for the catalytic activity of complex I. In Ailurus fulgens (Himalayan red panda), this protein is NADH-ubiquinone oxidoreductase chain 3.